The sequence spans 230 residues: Iron-dependent repressor IdeR (230 aa).

Residues 4-65 (LVDTTEMYLR…VAGNRHLELT (62 aa)) form the HTH dtxR-type domain.

This sequence belongs to the DtxR/MntR family. Homodimer.

It is found in the cytoplasm. In terms of biological role, metal-dependent DNA-binding protein that controls transcription of many genes involved in iron metabolism. This is Iron-dependent repressor IdeR (ideR) from Mycobacterium leprae (strain TN).